The primary structure comprises 545 residues: 2-oxo-Delta(3)-4,5,5-trimethylcyclopentenylacetyl-CoA monooxygenase (545 aa).

Residues Thr-20, Glu-39, 47 to 50 (TWYW), 59 to 60 (DT), Tyr-65, and Val-112 each bind FAD. 57-59 (RLD) lines the NADP(+) pocket. Residues 193–199 (TGATGVQ) and 216–217 (RT) each bind NADP(+). Val-446 is an FAD binding site. Trp-501 serves as a coordination point for NADP(+).

This sequence belongs to the FAD-binding monooxygenase family. Homodimer. Requires FAD as cofactor.

The enzyme catalyses [(1R)-2,2,3-trimethyl-5-oxocyclopent-3-enyl]acetyl-CoA + NADPH + O2 + H(+) = [(2R)-3,3,4-trimethyl-6-oxo-3,6-dihydro-1H-pyran-2-yl]acetyl-CoA + NADP(+) + H2O. Its pathway is terpene metabolism; (R)-camphor degradation. Involved in the degradation of (+)-camphor. Catalyzes the lactonization of 2-oxo-delta(3)-4,5, 5-trimethylcyclopentenylacetyl-CoA (OT-CoA), a key intermediate in the metabolism of camphor. 2-Oxocyclopentyl ethyl acetate is also a good substrate, as is 2-oxocyclohexyl ethyl acetate and methyl-substituted cyclohexanones, but free acid is a poor substrate. The sequence is that of 2-oxo-Delta(3)-4,5,5-trimethylcyclopentenylacetyl-CoA monooxygenase (otemo) from Pseudomonas putida (Arthrobacter siderocapsulatus).